Consider the following 652-residue polypeptide: Beta-mannosyltransferase 1 (652 aa).

Residues 1–15 lie on the Cytoplasmic side of the membrane; the sequence is MVDLFQWLKFYSMRR. Residues 16–34 form a helical membrane-spanning segment; the sequence is LGQVAITLVLLNLFVFLGY. The Extracellular portion of the chain corresponds to 35 to 652; that stretch reads KFTPSTVIGS…LYQLQEEERS (618 aa). N-linked (GlcNAc...) asparagine glycosylation occurs at Asn57. Residues 535 to 652 adopt a coiled-coil conformation; the sequence is PARYAKQMEN…LYQLQEEERS (118 aa). Positions 536–621 are disordered; it reads ARYAKQMENE…EAKENEAKKK (86 aa).

This sequence belongs to the BMT family.

The protein resides in the membrane. Its function is as follows. Beta-mannosyltransferase involved in cell wall biosynthesis. Involved in the beta-mannosylation of outer chains of N-glycans. The protein is Beta-mannosyltransferase 1 (BMT1) of Komagataella phaffii (strain ATCC 76273 / CBS 7435 / CECT 11047 / NRRL Y-11430 / Wegner 21-1) (Yeast).